The following is a 914-amino-acid chain: Serine/threonine-protein kinase MST20 (914 aa).

Over residues 1–12 the composition is skewed to polar residues; sequence MDGHSNFTQPSD. Disordered regions lie at residues 1–140, 156–184, and 251–286; these read MDGH…QLQN, NQYS…LTFN, and AMSE…VLRK. Composition is skewed to low complexity over residues 13–26, 63–72, and 79–97; these read TSHA…SSSS, RSSTSLRRAP, and TPTS…PSSS. The span at 122–136 shows a compositional bias: basic and acidic residues; the sequence is ARDRDSDPARNDHGH. The segment covering 156 to 166 has biased composition (basic residues); the sequence is NQYSAASHRRS. The span at 175-184 shows a compositional bias: polar residues; it reads PQSSNSLTFN. The segment covering 271–280 has biased composition (basic and acidic residues); it reads RYSDETKEPK. The region spanning 306–319 is the CRIB domain; that stretch reads ISAPENPVHVTHVG. Positions 408–615 are disordered; the sequence is SPMISPPASP…RHRSRQSNGL (208 aa). Composition is skewed to low complexity over residues 516 to 548 and 562 to 576; these read AYPA…QAQA and QPQA…SQHQ. Positions 577–586 are enriched in polar residues; it reads YSRPTDANGA. The segment covering 587–596 has biased composition (low complexity); that stretch reads QQTQRPQQPQ. The Protein kinase domain occupies 634-885; it reads YRSFTKIGQG…AHDLLRHEFM (252 aa). Residues 640–648 and Lys663 each bind ATP; that span reads IGQGASGGV. The active-site Proton acceptor is Asp753.

Belongs to the protein kinase superfamily. STE Ser/Thr protein kinase family. STE20 subfamily.

The protein resides in the cytoplasm. Its subcellular location is the nucleus. The catalysed reaction is L-seryl-[protein] + ATP = O-phospho-L-seryl-[protein] + ADP + H(+). The enzyme catalyses L-threonyl-[protein] + ATP = O-phospho-L-threonyl-[protein] + ADP + H(+). MAP4K component of the MAPK pathway required for the mating pheromone response and the regulation of cell polarity and cell cycle. Phosphorylates histone H2B to form H2BS10ph. Is involved in conidiation, aerial hyphal growth and infection-related morphogenesis. This is Serine/threonine-protein kinase MST20 (MST20) from Pyricularia oryzae (strain 70-15 / ATCC MYA-4617 / FGSC 8958) (Rice blast fungus).